A 203-amino-acid polypeptide reads, in one-letter code: Thymidine kinase (203 aa).

ATP contacts are provided by residues 9 to 16 and 87 to 90; these read ATMNAGKT and DEAQ. The active-site Proton acceptor is Glu-88. 4 residues coordinate Zn(2+): Cys-145, Cys-147, Cys-181, and His-184.

Belongs to the thymidine kinase family. In terms of assembly, homotetramer.

The protein localises to the cytoplasm. The catalysed reaction is thymidine + ATP = dTMP + ADP + H(+). The sequence is that of Thymidine kinase from Mesorhizobium japonicum (strain LMG 29417 / CECT 9101 / MAFF 303099) (Mesorhizobium loti (strain MAFF 303099)).